A 417-amino-acid chain; its full sequence is UDP-N-acetylglucosamine 1-carboxyvinyltransferase (417 aa).

Residue 22 to 23 (KN) participates in phosphoenolpyruvate binding. UDP-N-acetyl-alpha-D-glucosamine is bound at residue Arg-93. Cys-117 functions as the Proton donor in the catalytic mechanism. Cys-117 is modified (2-(S-cysteinyl)pyruvic acid O-phosphothioketal). UDP-N-acetyl-alpha-D-glucosamine-binding positions include 122–126 (RPVDQ), Asp-305, and Ile-327.

This sequence belongs to the EPSP synthase family. MurA subfamily.

Its subcellular location is the cytoplasm. The catalysed reaction is phosphoenolpyruvate + UDP-N-acetyl-alpha-D-glucosamine = UDP-N-acetyl-3-O-(1-carboxyvinyl)-alpha-D-glucosamine + phosphate. The protein operates within cell wall biogenesis; peptidoglycan biosynthesis. Its function is as follows. Cell wall formation. Adds enolpyruvyl to UDP-N-acetylglucosamine. The protein is UDP-N-acetylglucosamine 1-carboxyvinyltransferase of Nitrosomonas europaea (strain ATCC 19718 / CIP 103999 / KCTC 2705 / NBRC 14298).